Here is a 190-residue protein sequence, read N- to C-terminus: dCTP deaminase, dUMP-forming (190 aa).

DCTP-binding positions include 101 to 106 (KSSLGR), Asp119, 127 to 129 (TLE), Gln148, Tyr162, and Gln174. Glu129 acts as the Proton donor/acceptor in catalysis. The interval 163-190 (GSTRVGSKYQGQRGPTPSRSYQNFITST) is disordered. Residues 171–190 (YQGQRGPTPSRSYQNFITST) are compositionally biased toward polar residues.

This sequence belongs to the dCTP deaminase family. Homotrimer.

It catalyses the reaction dCTP + 2 H2O = dUMP + NH4(+) + diphosphate. It functions in the pathway pyrimidine metabolism; dUMP biosynthesis; dUMP from dCTP: step 1/1. Its function is as follows. Bifunctional enzyme that catalyzes both the deamination of dCTP to dUTP and the hydrolysis of dUTP to dUMP without releasing the toxic dUTP intermediate. The polypeptide is dCTP deaminase, dUMP-forming (Mycobacterium avium (strain 104)).